The chain runs to 484 residues: tRNA sulfurtransferase (484 aa).

A THUMP domain is found at 63–167; that stretch reads QAFGERLACI…GDKLYMVTKR (105 aa). ATP-binding positions include 185-186, K267, G289, and Q298; that span reads LI. C346 and C458 are oxidised to a cystine. Residues 406–484 form the Rhodanese domain; the sequence is IDTNEVVIDI…GYHNVKVYRP (79 aa). C458 acts as the Cysteine persulfide intermediate in catalysis.

It belongs to the ThiI family.

It is found in the cytoplasm. The enzyme catalyses [ThiI sulfur-carrier protein]-S-sulfanyl-L-cysteine + a uridine in tRNA + 2 reduced [2Fe-2S]-[ferredoxin] + ATP + H(+) = [ThiI sulfur-carrier protein]-L-cysteine + a 4-thiouridine in tRNA + 2 oxidized [2Fe-2S]-[ferredoxin] + AMP + diphosphate. It catalyses the reaction [ThiS sulfur-carrier protein]-C-terminal Gly-Gly-AMP + S-sulfanyl-L-cysteinyl-[cysteine desulfurase] + AH2 = [ThiS sulfur-carrier protein]-C-terminal-Gly-aminoethanethioate + L-cysteinyl-[cysteine desulfurase] + A + AMP + 2 H(+). Its pathway is cofactor biosynthesis; thiamine diphosphate biosynthesis. In terms of biological role, catalyzes the ATP-dependent transfer of a sulfur to tRNA to produce 4-thiouridine in position 8 of tRNAs, which functions as a near-UV photosensor. Also catalyzes the transfer of sulfur to the sulfur carrier protein ThiS, forming ThiS-thiocarboxylate. This is a step in the synthesis of thiazole, in the thiamine biosynthesis pathway. The sulfur is donated as persulfide by IscS. The sequence is that of tRNA sulfurtransferase from Shewanella oneidensis (strain ATCC 700550 / JCM 31522 / CIP 106686 / LMG 19005 / NCIMB 14063 / MR-1).